Reading from the N-terminus, the 142-residue chain is Hemoglobin subunit alpha (142 aa).

In terms of domain architecture, Globin spans 2–142 (VLSAADKTNV…LSTVLTSKYR (141 aa)). Serine 4 is modified (phosphoserine). Residue lysine 8 is modified to N6-succinyllysine. Threonine 9 carries the phosphothreonine modification. The residue at position 12 (lysine 12) is an N6-succinyllysine. Position 17 is an N6-acetyllysine; alternate (lysine 17). N6-succinyllysine; alternate is present on lysine 17. At tyrosine 25 the chain carries Phosphotyrosine. A Phosphoserine modification is found at serine 36. The residue at position 41 (lysine 41) is an N6-succinyllysine. Serine 50 bears the Phosphoserine mark. Glutamine 59 lines the O2 pocket. Histidine 88 lines the heme b pocket. Threonine 109 carries the post-translational modification Phosphothreonine. Serine 125 is modified (phosphoserine). 2 positions are modified to phosphothreonine: threonine 135 and threonine 138. A Phosphoserine modification is found at serine 139.

It belongs to the globin family. Heterotetramer of two alpha chains and two beta chains. As to expression, red blood cells.

Functionally, involved in oxygen transport from the lung to the various peripheral tissues. Hemopressin acts as an antagonist peptide of the cannabinoid receptor CNR1. Hemopressin-binding efficiently blocks cannabinoid receptor CNR1 and subsequent signaling. The sequence is that of Hemoglobin subunit alpha (HBA) from Monodelphis domestica (Gray short-tailed opossum).